Here is a 515-residue protein sequence, read N- to C-terminus: Bifunctional purine biosynthesis protein PurH (515 aa).

Residues 1-145 (MTKRALISVS…KNHASVTVVV (145 aa)) enclose the MGS-like domain.

It belongs to the PurH family.

The catalysed reaction is (6R)-10-formyltetrahydrofolate + 5-amino-1-(5-phospho-beta-D-ribosyl)imidazole-4-carboxamide = 5-formamido-1-(5-phospho-D-ribosyl)imidazole-4-carboxamide + (6S)-5,6,7,8-tetrahydrofolate. It catalyses the reaction IMP + H2O = 5-formamido-1-(5-phospho-D-ribosyl)imidazole-4-carboxamide. It participates in purine metabolism; IMP biosynthesis via de novo pathway; 5-formamido-1-(5-phospho-D-ribosyl)imidazole-4-carboxamide from 5-amino-1-(5-phospho-D-ribosyl)imidazole-4-carboxamide (10-formyl THF route): step 1/1. The protein operates within purine metabolism; IMP biosynthesis via de novo pathway; IMP from 5-formamido-1-(5-phospho-D-ribosyl)imidazole-4-carboxamide: step 1/1. In Streptococcus pyogenes serotype M18 (strain MGAS8232), this protein is Bifunctional purine biosynthesis protein PurH.